Reading from the N-terminus, the 384-residue chain is N-acetyldiaminopimelate deacetylase (384 aa).

Residue D74 is part of the active site. Catalysis depends on E133, which acts as the Proton acceptor.

This sequence belongs to the peptidase M20A family. N-acetyldiaminopimelate deacetylase subfamily.

It carries out the reaction N-acetyl-(2S,6S)-2,6-diaminopimelate + H2O = (2S,6S)-2,6-diaminopimelate + acetate. The protein operates within amino-acid biosynthesis; L-lysine biosynthesis via DAP pathway; LL-2,6-diaminopimelate from (S)-tetrahydrodipicolinate (acetylase route): step 3/3. In terms of biological role, catalyzes the conversion of N-acetyl-diaminopimelate to diaminopimelate and acetate. The chain is N-acetyldiaminopimelate deacetylase from Leuconostoc mesenteroides subsp. mesenteroides (strain ATCC 8293 / DSM 20343 / BCRC 11652 / CCM 1803 / JCM 6124 / NCDO 523 / NBRC 100496 / NCIMB 8023 / NCTC 12954 / NRRL B-1118 / 37Y).